Consider the following 168-residue polypeptide: uncharacterized protein (168 aa).

2 disordered regions span residues 1 to 81 and 119 to 150; these read MSSA…GRSW and RDLS…STVA. Residues 7-34 are compositionally biased toward low complexity; that stretch reads SRTSRSKATGASSSSISSSIRASPSSSS. Residues 43–67 show a composition bias toward basic residues; it reads TRRRRRRTGRRSTKRSIISPRRRRM. Over residues 123 to 146 the composition is skewed to polar residues; that stretch reads ESASTGSENLSRKASNQSQSQGRL.

This is an uncharacterized protein from Human adenovirus C serotype 2 (HAdV-2).